The following is a 496-amino-acid chain: MSYLLALDQGTTSSRALVLDRDGQVKGAAQQTFAQHYPQPGWVEHDPAEILATQFDCARTALERAGVAASALAAVGITNQRETTLLWERSTGRALAPAIVWQDRRTAAACDRLREAGHADTIRASTGLEVDAYFSATKLAWLLDHVPGARARARAGELAFGTVDSWLVWHLSGGALHVTDAGNASRTMLFNIHRCEWDETLLALLDIPPALLPRVVDSSGVCGTTCAEVLGAAVPIAGIGGDQQAATFGQACFAPGMAKNTYGTGCFLLMNTGAAPVTSTNRLLTTIGWRSRGETCYALEGSIFIGGALVQWLRDGLGLIRRAEDVEALAASVPDSEGVVLVPAFTGLGAPYWDAYARGTLFGLTRGTGAAHIARAALEAIALQTVDLVAAMDRDGAGPLAELRVDGGAAANDLLMQIQADLLGVPVVRPKMLETTALGAAYLAGLGVGMWSGIEELASHWRAERRFEPVMAEDRREAAIARWRRAVERARGWVAA.

ADP is bound at residue T11. 3 residues coordinate ATP: T11, T12, and S13. T11 serves as a coordination point for sn-glycerol 3-phosphate. R15 serves as a coordination point for ADP. Positions 81, 82, 133, and 242 each coordinate sn-glycerol 3-phosphate. Glycerol contacts are provided by R81, E82, Y133, D242, and Q243. ADP is bound by residues T264 and G307. Residues T264, G307, Q311, and G408 each contribute to the ATP site. ADP-binding residues include G408 and N412.

The protein belongs to the FGGY kinase family.

It carries out the reaction glycerol + ATP = sn-glycerol 3-phosphate + ADP + H(+). The protein operates within polyol metabolism; glycerol degradation via glycerol kinase pathway; sn-glycerol 3-phosphate from glycerol: step 1/1. Its activity is regulated as follows. Inhibited by fructose 1,6-bisphosphate (FBP). Functionally, key enzyme in the regulation of glycerol uptake and metabolism. Catalyzes the phosphorylation of glycerol to yield sn-glycerol 3-phosphate. The sequence is that of Glycerol kinase from Aromatoleum aromaticum (strain DSM 19018 / LMG 30748 / EbN1) (Azoarcus sp. (strain EbN1)).